The primary structure comprises 112 residues: Small ribosomal subunit protein bS6 (112 aa).

The protein belongs to the bacterial ribosomal protein bS6 family.

Binds together with bS18 to 16S ribosomal RNA. The sequence is that of Small ribosomal subunit protein bS6 from Chlamydia felis (strain Fe/C-56) (Chlamydophila felis).